The following is a 66-amino-acid chain: Small ribosomal subunit protein bS21 (66 aa).

The protein belongs to the bacterial ribosomal protein bS21 family.

The sequence is that of Small ribosomal subunit protein bS21 from Persephonella marina (strain DSM 14350 / EX-H1).